The sequence spans 513 residues: ATP synthase subunit alpha (513 aa).

169–176 contributes to the ATP binding site; that stretch reads GDRQTGKT.

This sequence belongs to the ATPase alpha/beta chains family. As to quaternary structure, F-type ATPases have 2 components, CF(1) - the catalytic core - and CF(0) - the membrane proton channel. CF(1) has five subunits: alpha(3), beta(3), gamma(1), delta(1), epsilon(1). CF(0) has three main subunits: a(1), b(2) and c(9-12). The alpha and beta chains form an alternating ring which encloses part of the gamma chain. CF(1) is attached to CF(0) by a central stalk formed by the gamma and epsilon chains, while a peripheral stalk is formed by the delta and b chains.

The protein localises to the cell inner membrane. It catalyses the reaction ATP + H2O + 4 H(+)(in) = ADP + phosphate + 5 H(+)(out). In terms of biological role, produces ATP from ADP in the presence of a proton gradient across the membrane. The alpha chain is a regulatory subunit. In Ralstonia nicotianae (strain ATCC BAA-1114 / GMI1000) (Ralstonia solanacearum), this protein is ATP synthase subunit alpha.